Here is a 522-residue protein sequence, read N- to C-terminus: Sulfite reductase [NADPH] flavoprotein alpha-component (522 aa).

Positions 60–198 (ITILFGSQTG…DTERWSSDAL (139 aa)) constitute a Flavodoxin-like domain. The interval 217–242 (TLRSHQDLRSHQEQSRNRARPYDKDN) is disordered. Basic and acidic residues predominate over residues 220-242 (SHQDLRSHQEQSRNRARPYDKDN). Residues 241-399 (DNPYTATLLE…VAPYRAFLQQ (159 aa)) enclose the FAD-binding FR-type domain.

Alpha(8)-beta(8). The alpha component is a flavoprotein, the beta component is a hemoprotein. FAD is required as a cofactor. Requires FMN as cofactor.

The enzyme catalyses hydrogen sulfide + 3 NADP(+) + 3 H2O = sulfite + 3 NADPH + 4 H(+). In terms of biological role, catalyzes the 6-electron reduction of sulfite to sulfide. This is one of several activities required for the biosynthesis of L-cysteine from sulfate. The flavo-protein component catalyzes the electron flow from NADPH -&gt; FAD -&gt; FMN to the hemoprotein component. The protein is Sulfite reductase [NADPH] flavoprotein alpha-component (cysJ) of Thiocapsa roseopersicina.